A 588-amino-acid chain; its full sequence is Proteasome-associated ATPase (588 aa).

A compositionally biased stretch (basic and acidic residues) spans Met-1–Arg-10. A disordered region spans residues Met-1–Ala-22. Positions Arg-47–Pro-94 form a coiled coil. Residue Gly-276–Leu-281 coordinates ATP. Positions Tyr-587–Leu-588 are docks into pockets in the proteasome alpha-ring.

This sequence belongs to the AAA ATPase family. In terms of assembly, homohexamer. Assembles into a hexameric ring structure that caps the 20S proteasome core. Strongly interacts with the prokaryotic ubiquitin-like protein Pup through a hydrophobic interface; the interacting region of ARC lies in its N-terminal coiled-coil domain. There is one Pup binding site per ARC hexamer ring. Upon ATP-binding, the C-terminus of ARC interacts with the alpha-rings of the proteasome core, possibly by binding to the intersubunit pockets.

Its pathway is protein degradation; proteasomal Pup-dependent pathway. Its function is as follows. ATPase which is responsible for recognizing, binding, unfolding and translocation of pupylated proteins into the bacterial 20S proteasome core particle. May be essential for opening the gate of the 20S proteasome via an interaction with its C-terminus, thereby allowing substrate entry and access to the site of proteolysis. Thus, the C-termini of the proteasomal ATPase may function like a 'key in a lock' to induce gate opening and therefore regulate proteolysis. In Streptomyces griseus subsp. griseus (strain JCM 4626 / CBS 651.72 / NBRC 13350 / KCC S-0626 / ISP 5235), this protein is Proteasome-associated ATPase.